A 722-amino-acid chain; its full sequence is Serine/threonine-protein kinase dkf-1 (722 aa).

Phorbol-ester/DAG-type zinc fingers lie at residues 98–148 (PHVV…RNNC) and 186–236 (PHTL…ASNC). In terms of domain architecture, PH spans 279–407 (KKLEGWMMHF…QFIKESLQPP (129 aa)). Residues 426-685 (VLSDKTLGSG…IEQCLDHGWL (260 aa)) enclose the Protein kinase domain. Residues 432 to 440 (LGSGQFGTV) and Lys455 each bind ATP. The Proton acceptor role is filled by Asp551. Residue Thr588 is modified to Phosphothreonine.

It belongs to the protein kinase superfamily. CAMK Ser/Thr protein kinase family. PKD subfamily. Requires Mg(2+) as cofactor. Post-translationally, prolonged phosphorylation at Thr-588 results in ubiquitination and degradation. As to expression, highly expressed in embryos and at lower levels through the four larval stages in adults. Present in a region bounded by the anterior and posterior bulbs of the pharynx and an area of the tail containing the lumbar, dorsorectal and pre-anal ganglia. Expressed in neurons.

Its subcellular location is the cytoplasm. The protein localises to the membrane. It catalyses the reaction L-seryl-[protein] + ATP = O-phospho-L-seryl-[protein] + ADP + H(+). The enzyme catalyses L-threonyl-[protein] + ATP = O-phospho-L-threonyl-[protein] + ADP + H(+). Activated by DAG and phorbol esters. Phorbol-ester/DAG-type domain 1 binds phorbol ester with high affinity and mediates accumulation at the cell periphery. Phorbol-ester/DAG-type domain 2 binds phorbol ester with low affinity but may mediate initial contact, resulting in a conformational change allowing previously occluded domain 1 to anchor the kinase. Phosphorylation on Thr-588 is then also required for activation and may also result in a further conformational change. Converts transient diacylglycerol (DAG) signals into prolonged physiological effects, independently of PKC. Role in the regulation of growth and neuromuscular control of movement. Involved in immune response to S.aureus bacterium by activating transcription factor hlh-30 downstream of phospholipase plc-1. The polypeptide is Serine/threonine-protein kinase dkf-1 (dkf-1) (Caenorhabditis elegans).